The sequence spans 638 residues: ATP-dependent rRNA helicase spb4 (638 aa).

A Q motif motif is present at residues 14-42 (WDGVSPSLSEWVLEAVSSMGFTRMTPVQA). The 205-residue stretch at 45-249 (IPLFMAHKDV…RVGLRNPVKV (205 aa)) folds into the Helicase ATP-binding domain. Residue 58-65 (AVTGSGKT) participates in ATP binding. The DEAD box signature appears at 197-200 (DEAD). Residues 283 to 437 (ALKHILHSVD…PISFSESEAT (155 aa)) enclose the Helicase C-terminal domain. Composition is skewed to basic and acidic residues over residues 534-554 (LLQESKEGDGTQESSNKRKAT) and 577-615 (QRRQEKNKWEKMTEEERQKIRETEQMVESIRVKNEEERR). A disordered region spans residues 534 to 638 (LLQESKEGDG…KDEEEFEGFD (105 aa)). Residues 566–619 (RNKKQKRREQKQRRQEKNKWEKMTEEERQKIRETEQMVESIRVKNEEERRLRRA) are a coiled coil.

This sequence belongs to the DEAD box helicase family. DDX55/SPB4 subfamily. In terms of assembly, component of pre-60S ribosomal complexes.

The protein resides in the nucleus. It localises to the nucleolus. It carries out the reaction ATP + H2O = ADP + phosphate + H(+). Functionally, ATP-binding RNA helicase involved in the biogenesis of 60S ribosomal subunits. Binds 90S pre-ribosomal particles and dissociates from pre-60S ribosomal particles after processing of 27SB pre-rRNA. Required for the normal formation of 18S rRNA through the processing of pre-rRNAs at sites A0, A1 and A2, and the normal formation of 25S and 5.8S rRNAs through the processing of pre-rRNAs at sites C1 and C2. This chain is ATP-dependent rRNA helicase spb4, found in Aspergillus oryzae (strain ATCC 42149 / RIB 40) (Yellow koji mold).